The primary structure comprises 320 residues: ADP-L-glycero-D-manno-heptose-6-epimerase (320 aa).

NADP(+)-binding positions include 10 to 11 (FI), 31 to 32 (DN), K38, K53, 75 to 79 (LGACS), and N92. Catalysis depends on Y139, which acts as the Proton acceptor. Position 143 (K143) interacts with NADP(+). N168 is a binding site for substrate. Residues V169 and K177 each coordinate NADP(+). The active-site Proton acceptor is the K177. Substrate contacts are provided by residues G179, H186, 200 to 203 (FEGS), R213, and Y277.

It belongs to the NAD(P)-dependent epimerase/dehydratase family. HldD subfamily. In terms of assembly, homopentamer. It depends on NADP(+) as a cofactor.

It catalyses the reaction ADP-D-glycero-beta-D-manno-heptose = ADP-L-glycero-beta-D-manno-heptose. Its pathway is nucleotide-sugar biosynthesis; ADP-L-glycero-beta-D-manno-heptose biosynthesis; ADP-L-glycero-beta-D-manno-heptose from D-glycero-beta-D-manno-heptose 7-phosphate: step 4/4. Functionally, catalyzes the interconversion between ADP-D-glycero-beta-D-manno-heptose and ADP-L-glycero-beta-D-manno-heptose via an epimerization at carbon 6 of the heptose. This chain is ADP-L-glycero-D-manno-heptose-6-epimerase, found in Alkalilimnicola ehrlichii (strain ATCC BAA-1101 / DSM 17681 / MLHE-1).